The sequence spans 168 residues: uncharacterized protein (168 aa).

2 consecutive transmembrane segments (helical) span residues 4 to 24 (IIAL…PEEE) and 94 to 114 (IMVG…GFAW).

The protein to A.aeolicus aq_1446.

It localises to the cell membrane. This is an uncharacterized protein from Aquifex aeolicus (strain VF5).